Here is an 828-residue protein sequence, read N- to C-terminus: DNA gyrase subunit A (828 aa).

The region spanning 32 to 497 is the Topo IIA-type catalytic domain; sequence LPDVRDGLKP…EVLSLEDEDL (466 aa). The active-site O-(5'-phospho-DNA)-tyrosine intermediate is tyrosine 120. Positions 524-530 match the GyrA-box motif; sequence QKRGGRG.

It belongs to the type II topoisomerase GyrA/ParC subunit family. In terms of assembly, heterotetramer, composed of two GyrA and two GyrB chains. In the heterotetramer, GyrA contains the active site tyrosine that forms a transient covalent intermediate with DNA, while GyrB binds cofactors and catalyzes ATP hydrolysis.

The protein localises to the cytoplasm. The catalysed reaction is ATP-dependent breakage, passage and rejoining of double-stranded DNA.. In terms of biological role, a type II topoisomerase that negatively supercoils closed circular double-stranded (ds) DNA in an ATP-dependent manner to modulate DNA topology and maintain chromosomes in an underwound state. Negative supercoiling favors strand separation, and DNA replication, transcription, recombination and repair, all of which involve strand separation. Also able to catalyze the interconversion of other topological isomers of dsDNA rings, including catenanes and knotted rings. Type II topoisomerases break and join 2 DNA strands simultaneously in an ATP-dependent manner. This is DNA gyrase subunit A from Streptococcus pyogenes serotype M3 (strain ATCC BAA-595 / MGAS315).